Reading from the N-terminus, the 592-residue chain is Insulin-like growth factor 2 mRNA-binding protein 2 (592 aa).

RRM domains lie at 3-76 (NKLY…YSVS) and 82-157 (RRIQ…YIPD). Serine 11 is modified (phosphoserine). Positions 157–182 (DEEVSSPSPPHRAREQGHGPGSSSQA) are disordered. Residues serine 162 and serine 164 each carry the phosphoserine modification. 4 KH domains span residues 186–251 (DFPL…CRMI), 267–334 (EVPL…EIEI), 420–485 (QETV…QGRI), and 502–568 (KLEA…QRKI). Position 543 is a phosphothreonine (threonine 543).

It belongs to the RRM IMP/VICKZ family. Can form homooligomers and heterooligomers with IGF2BP1 and IGF2BP3 in an RNA-dependent manner. Interacts with HNRPD. Interacts with IGF2BP1. Interacts with ELAVL1, DHX9, HNRNPU, MATR3 and PABPC1. Expressed in oocytes, granulosa cells of small and growing follicles and Leydig cells of the testis (at protein level). Expressed in testis and ovary.

Its subcellular location is the nucleus. It is found in the cytoplasm. The protein localises to the P-body. The protein resides in the stress granule. In terms of biological role, RNA-binding factor that recruits target transcripts to cytoplasmic protein-RNA complexes (mRNPs). This transcript 'caging' into mRNPs allows mRNA transport and transient storage. It also modulates the rate and location at which target transcripts encounter the translational apparatus and shields them from endonuclease attacks or microRNA-mediated degradation. Preferentially binds to N6-methyladenosine (m6A)-containing mRNAs and increases their stability. Binds to the 5'-UTR of the insulin-like growth factor 2 (IGF2) mRNAs. Binding is isoform-specific. Binds to beta-actin/ACTB and MYC transcripts. Increases MYC mRNA stability by binding to the coding region instability determinant (CRD) and binding is enhanced by m6A-modification of the CRD. This chain is Insulin-like growth factor 2 mRNA-binding protein 2 (Igf2bp2), found in Mus musculus (Mouse).